The primary structure comprises 275 residues: Small ribosomal subunit protein uS2 (275 aa).

The tract at residues 244–275 (REGAEASKKKATVKKKAAPRAASGESAEAAAE) is disordered. Over residues 252–261 (KKATVKKKAA) the composition is skewed to basic residues. The span at 262–275 (PRAASGESAEAAAE) shows a compositional bias: low complexity.

This sequence belongs to the universal ribosomal protein uS2 family.

In Thioalkalivibrio sulfidiphilus (strain HL-EbGR7), this protein is Small ribosomal subunit protein uS2.